The following is a 326-amino-acid chain: MSPRQLNFLSAFSLSVAIAVVYHQAWGIAVAQPILPSEAVETGVISNGISINLFQAFVLGFIQGATEFLPISSTAHLKAVPMALGWGDPGVAFTAVIQLGSIGAVFWYFWEDLTGIAKGIIKAVQTRQYDSLEFKLGLGIGLGTIPIVFFGLLMKLLVQDLDNSFFRSLSTIAIASIVMALLLALAEKLGTHRRPFEKLRWQDGLIMGTAQALALIPGVSRSGSTLTAGLFINLERAAAARFSFLLGIPAITIAGLVELKGLLDKNLSNDAILPLIVGTISSAVFSYLAIAWLIKFLQKRSTWIFVWYRLIFGVVILTALGMGFGT.

9 helical membrane passes run A11–A31, T42–I62, G90–W110, L138–V158, F165–L185, A212–I232, F242–L262, I272–W292, and I304–F324.

Belongs to the UppP family.

The protein resides in the cell inner membrane. It carries out the reaction di-trans,octa-cis-undecaprenyl diphosphate + H2O = di-trans,octa-cis-undecaprenyl phosphate + phosphate + H(+). In terms of biological role, catalyzes the dephosphorylation of undecaprenyl diphosphate (UPP). Confers resistance to bacitracin. In Synechocystis sp. (strain ATCC 27184 / PCC 6803 / Kazusa), this protein is Undecaprenyl-diphosphatase.